We begin with the raw amino-acid sequence, 177 residues long: Large ribosomal subunit protein uL16m (177 aa).

This sequence belongs to the universal ribosomal protein uL16 family.

Its subcellular location is the mitochondrion. The sequence is that of Large ribosomal subunit protein uL16m (RPL16) from Brassica napus (Rape).